Reading from the N-terminus, the 188-residue chain is ATP synthase subunit b (188 aa).

Residues 19 to 39 (LPAVYDIVWSAVVFVVLLVVI) traverse the membrane as a helical segment.

This sequence belongs to the ATPase B chain family. F-type ATPases have 2 components, F(1) - the catalytic core - and F(0) - the membrane proton channel. F(1) has five subunits: alpha(3), beta(3), gamma(1), delta(1), epsilon(1). F(0) has three main subunits: a(1), b(2) and c(10-14). The alpha and beta chains form an alternating ring which encloses part of the gamma chain. F(1) is attached to F(0) by a central stalk formed by the gamma and epsilon chains, while a peripheral stalk is formed by the delta and b chains.

Its subcellular location is the cell membrane. Functionally, f(1)F(0) ATP synthase produces ATP from ADP in the presence of a proton or sodium gradient. F-type ATPases consist of two structural domains, F(1) containing the extramembraneous catalytic core and F(0) containing the membrane proton channel, linked together by a central stalk and a peripheral stalk. During catalysis, ATP synthesis in the catalytic domain of F(1) is coupled via a rotary mechanism of the central stalk subunits to proton translocation. In terms of biological role, component of the F(0) channel, it forms part of the peripheral stalk, linking F(1) to F(0). The sequence is that of ATP synthase subunit b from Clavibacter michiganensis subsp. michiganensis (strain NCPPB 382).